A 266-amino-acid polypeptide reads, in one-letter code: uncharacterized protein (266 aa).

7 helical membrane passes run 25-45 (LPSL…GYLL), 64-84 (IGAA…AELI), 111-131 (IVTI…GHLV), 158-178 (VLIS…LSFG), 186-206 (ILGI…HVVA), 209-229 (FVIP…IGNI), and 230-250 (IPAF…IYFI).

This sequence belongs to the FNT transporter (TC 1.A.16) family.

The protein resides in the cell membrane. This is an uncharacterized protein from Bacillus subtilis (strain 168).